The primary structure comprises 261 residues: Cytochrome c oxidase subunit 2 (261 aa).

Residues 1–34 (MSFTGIFHFFTNSPCDAAEPWQLGSQDAATPMMQ) are Mitochondrial intermembrane-facing. The helical transmembrane segment at 35–55 (GIIDLHHDIFFFLILILVFVS) threads the bilayer. Residues 56 to 87 (RILVRALWHFHSKKNPIPQRIVHGTTIEILRT) are Mitochondrial matrix-facing. The helical transmembrane segment at 88–108 (IFPSIIPMFIAIPSFALLYSM) threads the bilayer. The Mitochondrial intermembrane segment spans residues 109 to 261 (DEVVVDPAMT…NQLIPQTGEA (153 aa)). Cu cation contacts are provided by histidine 188, cysteine 223, glutamate 225, cysteine 227, and histidine 231. Glutamate 225 is a Mg(2+) binding site.

This sequence belongs to the cytochrome c oxidase subunit 2 family. Component of the cytochrome c oxidase (complex IV, CIV), a multisubunit enzyme composed of a catalytic core of 3 subunits and several supernumerary subunits. The complex exists as a monomer or a dimer and forms supercomplexes (SCs) in the inner mitochondrial membrane with ubiquinol-cytochrome c oxidoreductase (cytochrome b-c1 complex, complex III, CIII). Requires Cu cation as cofactor.

It localises to the mitochondrion inner membrane. It catalyses the reaction 4 Fe(II)-[cytochrome c] + O2 + 8 H(+)(in) = 4 Fe(III)-[cytochrome c] + 2 H2O + 4 H(+)(out). Its function is as follows. Component of the cytochrome c oxidase, the last enzyme in the mitochondrial electron transport chain which drives oxidative phosphorylation. The respiratory chain contains 3 multisubunit complexes succinate dehydrogenase (complex II, CII), ubiquinol-cytochrome c oxidoreductase (cytochrome b-c1 complex, complex III, CIII) and cytochrome c oxidase (complex IV, CIV), that cooperate to transfer electrons derived from NADH and succinate to molecular oxygen, creating an electrochemical gradient over the inner membrane that drives transmembrane transport and the ATP synthase. Cytochrome c oxidase is the component of the respiratory chain that catalyzes the reduction of oxygen to water. Electrons originating from reduced cytochrome c in the intermembrane space (IMS) are transferred via the dinuclear copper A center (CU(A)) of subunit 2 and heme A of subunit 1 to the active site in subunit 1, a binuclear center (BNC) formed by heme A3 and copper B (CU(B)). The BNC reduces molecular oxygen to 2 water molecules using 4 electrons from cytochrome c in the IMS and 4 protons from the mitochondrial matrix. The chain is Cytochrome c oxidase subunit 2 (COX2) from Daucus carota (Wild carrot).